Reading from the N-terminus, the 1217-residue chain is ATP-dependent helicase/nuclease subunit A (1217 aa).

The 466-residue stretch at 10–475 folds into the UvrD-like helicase ATP-binding domain; that stretch reads VIWTDAQWQS…IDLSQNFRSR (466 aa). Residue 31 to 38 coordinates ATP; it reads AAAGSGKT. The UvrD-like helicase C-terminal domain occupies 476 to 786; it reads KEVLSTTNYI…RMMTIHSSKG (311 aa).

It belongs to the helicase family. AddA subfamily. As to quaternary structure, heterodimer of AddA and AddB/RexB. Mg(2+) is required as a cofactor.

It carries out the reaction Couples ATP hydrolysis with the unwinding of duplex DNA by translocating in the 3'-5' direction.. The enzyme catalyses ATP + H2O = ADP + phosphate + H(+). Its function is as follows. The heterodimer acts as both an ATP-dependent DNA helicase and an ATP-dependent, dual-direction single-stranded exonuclease. Recognizes the chi site generating a DNA molecule suitable for the initiation of homologous recombination. The AddA nuclease domain is required for chi fragment generation; this subunit has the helicase and 3' -&gt; 5' nuclease activities. The polypeptide is ATP-dependent helicase/nuclease subunit A (Staphylococcus aureus (strain MW2)).